Here is a 607-residue protein sequence, read N- to C-terminus: Albumin (607 aa).

The signal sequence occupies residues 1–18; the sequence is MKWVTFISLLLLFSSAYS. Positions 19-24 are excised as a propeptide; the sequence is RGVFRR. 3 consecutive Albumin domains span residues 19–209, 210–402, and 403–600; these read RGVF…DAMR, EKVL…KLKH, and LVDE…KLVA. H27 contributes to the Cu cation binding site. S29 is subject to Phosphoserine. 2 residues coordinate Ca(2+): E30 and D37. C77 and C86 form a disulfide bridge. Residues S82 and S89 each carry the phosphoserine modification. H91 contacts Zn(2+). Intrachain disulfides connect C99–C115, C114–C125, C147–C192, C191–C200, C223–C269, and C268–C276. T107 carries the post-translational modification Phosphothreonine. At K228 the chain carries N6-succinyllysine. Position 267 (E267) interacts with Ca(2+). Residues H270 and D272 each coordinate Zn(2+). Ca(2+) is bound by residues D272, E275, D278, and D282. Cystine bridges form between C288–C302, C301–C312, C339–C384, C383–C392, C415–C461, C460–C471, C484–C500, and C499–C510. At S296 the chain carries Phosphoserine. Residue S442 is modified to Phosphoserine. A phosphothreonine mark is found at T443 and T445. Position 459 is an N6-succinyllysine (K459). The residue at position 512 (S512) is a Phosphoserine. Disulfide bonds link C537-C582 and C581-C590. K557 is modified (N6-methyllysine). The residue at position 569 (T569) is a Phosphothreonine. K587 bears the N6-succinyllysine mark.

Belongs to the ALB/AFP/VDB family. Interacts with FCGRT; this interaction regulates ALB homeostasis. Interacts with TASOR. In plasma, occurs in a covalently-linked complex with chromophore-bound alpha-1-microglobulin; this interaction does not prevent fatty acid binding to ALB. In terms of processing, phosphorylated by FAM20C in the extracellular medium. As to expression, plasma.

It localises to the secreted. In terms of biological role, binds water, Ca(2+), Na(+), K(+), fatty acids, hormones, bilirubin and drugs. Its main function is the regulation of the colloidal osmotic pressure of blood. Major zinc transporter in plasma, typically binds about 80% of all plasma zinc. Major calcium and magnesium transporter in plasma, binds approximately 45% of circulating calcium and magnesium in plasma. Potentially has more than two calcium-binding sites and might additionally bind calcium in a non-specific manner. The shared binding site between zinc and calcium at residue Asp-272 suggests a crosstalk between zinc and calcium transport in the blood. The rank order of affinity is zinc &gt; calcium &gt; magnesium. Binds to the bacterial siderophore enterobactin and inhibits enterobactin-mediated iron uptake of E.coli from ferric transferrin, and may thereby limit the utilization of iron and growth of enteric bacteria such as E.coli. Does not prevent iron uptake by the bacterial siderophore aerobactin. The protein is Albumin (ALB) of Ovis aries (Sheep).